The chain runs to 86 residues: Omega-theraphotoxin-Hhn1c (86 aa).

An N-terminal signal peptide occupies residues 1 to 21 (MKSIVFVALFGLALLAVVCSA). A propeptide spanning residues 22–50 (SEDAHKELLKEVVRAMVVDKTDAVQAEER) is cleaved from the precursor. Intrachain disulfides connect Cys52/Cys66, Cys59/Cys71, and Cys65/Cys78.

The protein belongs to the neurotoxin 10 (Hwtx-1) family. 17 (Hntx-9) subfamily. Expressed by the venom gland.

Its subcellular location is the secreted. In terms of biological role, ion channel inhibitor. This is Omega-theraphotoxin-Hhn1c from Cyriopagopus hainanus (Chinese bird spider).